Reading from the N-terminus, the 263-residue chain is Pyridoxine 5'-phosphate synthase (263 aa).

Residue Asn15 participates in 3-amino-2-oxopropyl phosphate binding. 17–18 contributes to the 1-deoxy-D-xylulose 5-phosphate binding site; sequence DH. Arg26 provides a ligand contact to 3-amino-2-oxopropyl phosphate. His51 (proton acceptor) is an active-site residue. Residues Arg53 and His58 each contribute to the 1-deoxy-D-xylulose 5-phosphate site. The active-site Proton acceptor is the Glu78. Thr108 is a binding site for 1-deoxy-D-xylulose 5-phosphate. Catalysis depends on His199, which acts as the Proton donor. 3-amino-2-oxopropyl phosphate contacts are provided by residues Gly200 and 221–222; that span reads GH.

Belongs to the PNP synthase family. As to quaternary structure, homooctamer; tetramer of dimers.

Its subcellular location is the cytoplasm. It catalyses the reaction 3-amino-2-oxopropyl phosphate + 1-deoxy-D-xylulose 5-phosphate = pyridoxine 5'-phosphate + phosphate + 2 H2O + H(+). The protein operates within cofactor biosynthesis; pyridoxine 5'-phosphate biosynthesis; pyridoxine 5'-phosphate from D-erythrose 4-phosphate: step 5/5. Catalyzes the complicated ring closure reaction between the two acyclic compounds 1-deoxy-D-xylulose-5-phosphate (DXP) and 3-amino-2-oxopropyl phosphate (1-amino-acetone-3-phosphate or AAP) to form pyridoxine 5'-phosphate (PNP) and inorganic phosphate. The polypeptide is Pyridoxine 5'-phosphate synthase (Ralstonia nicotianae (strain ATCC BAA-1114 / GMI1000) (Ralstonia solanacearum)).